The following is a 268-amino-acid chain: tRNA pseudouridine synthase A (268 aa).

The active-site Nucleophile is Asp54. Tyr112 is a binding site for substrate.

Belongs to the tRNA pseudouridine synthase TruA family. In terms of assembly, homodimer.

The catalysed reaction is uridine(38/39/40) in tRNA = pseudouridine(38/39/40) in tRNA. Its function is as follows. Formation of pseudouridine at positions 38, 39 and 40 in the anticodon stem and loop of transfer RNAs. The sequence is that of tRNA pseudouridine synthase A from Bordetella petrii (strain ATCC BAA-461 / DSM 12804 / CCUG 43448).